The chain runs to 513 residues: Probable hydrolase YhcX (513 aa).

In terms of domain architecture, N-acetyltransferase spans 14 to 212 (MVIRNIEEKD…YATLMEWNNV (199 aa)). A CN hydrolase domain is found at 229–484 (VRICVIQYEM…EMVVIGDVDL (256 aa)). The Proton acceptor role is filled by glutamate 270. Lysine 345 functions as the Proton donor in the catalytic mechanism. The Nucleophile role is filled by cysteine 379.

The protein belongs to the carbon-nitrogen hydrolase superfamily. NIT1/NIT2 family.

The chain is Probable hydrolase YhcX (yhcX) from Bacillus subtilis (strain 168).